Here is a 251-residue protein sequence, read N- to C-terminus: Coproheme decarboxylase (251 aa).

Residues Arg-133, 147–151 (YPMSK), His-174, Gln-187, and Ser-225 each bind Fe-coproporphyrin III. Tyr-147 is a catalytic residue.

Belongs to the ChdC family. Type 1 subfamily. Requires Fe-coproporphyrin III as cofactor.

The enzyme catalyses Fe-coproporphyrin III + 2 H2O2 + 2 H(+) = heme b + 2 CO2 + 4 H2O. It catalyses the reaction Fe-coproporphyrin III + H2O2 + H(+) = harderoheme III + CO2 + 2 H2O. It carries out the reaction harderoheme III + H2O2 + H(+) = heme b + CO2 + 2 H2O. It participates in porphyrin-containing compound metabolism; protoheme biosynthesis. Functionally, involved in coproporphyrin-dependent heme b biosynthesis. Catalyzes the decarboxylation of Fe-coproporphyrin III (coproheme) to heme b (protoheme IX), the last step of the pathway. The reaction occurs in a stepwise manner with a three-propionate intermediate. The protein is Coproheme decarboxylase of Listeria monocytogenes serotype 4b (strain CLIP80459).